We begin with the raw amino-acid sequence, 292 residues long: 4-hydroxy-tetrahydrodipicolinate synthase (292 aa).

Thr45 contributes to the pyruvate binding site. Tyr133 acts as the Proton donor/acceptor in catalysis. The active-site Schiff-base intermediate with substrate is the Lys162. Position 204 (Ile204) interacts with pyruvate.

This sequence belongs to the DapA family. In terms of assembly, homotetramer; dimer of dimers.

The protein resides in the cytoplasm. The enzyme catalyses L-aspartate 4-semialdehyde + pyruvate = (2S,4S)-4-hydroxy-2,3,4,5-tetrahydrodipicolinate + H2O + H(+). Its pathway is amino-acid biosynthesis; L-lysine biosynthesis via DAP pathway; (S)-tetrahydrodipicolinate from L-aspartate: step 3/4. Catalyzes the condensation of (S)-aspartate-beta-semialdehyde [(S)-ASA] and pyruvate to 4-hydroxy-tetrahydrodipicolinate (HTPA). In Nitratidesulfovibrio vulgaris (strain DSM 19637 / Miyazaki F) (Desulfovibrio vulgaris), this protein is 4-hydroxy-tetrahydrodipicolinate synthase.